Reading from the N-terminus, the 196-residue chain is ATP-dependent Clp protease proteolytic subunit (196 aa).

Ser-96 serves as the catalytic Nucleophile. Residue His-121 is part of the active site.

Belongs to the peptidase S14 family. As to quaternary structure, fourteen ClpP subunits assemble into 2 heptameric rings which stack back to back to give a disk-like structure with a central cavity, resembling the structure of eukaryotic proteasomes.

It localises to the cytoplasm. It carries out the reaction Hydrolysis of proteins to small peptides in the presence of ATP and magnesium. alpha-casein is the usual test substrate. In the absence of ATP, only oligopeptides shorter than five residues are hydrolyzed (such as succinyl-Leu-Tyr-|-NHMec, and Leu-Tyr-Leu-|-Tyr-Trp, in which cleavage of the -Tyr-|-Leu- and -Tyr-|-Trp bonds also occurs).. In terms of biological role, cleaves peptides in various proteins in a process that requires ATP hydrolysis. Has a chymotrypsin-like activity. Plays a major role in the degradation of misfolded proteins. This chain is ATP-dependent Clp protease proteolytic subunit, found in Streptococcus sanguinis (strain SK36).